The following is a 125-amino-acid chain: uncharacterized protein (125 aa).

The span at 1–33 (MLPHQNSSYTRQGTNDAQANDMRSPSQLPTSVN) shows a compositional bias: polar residues. 2 disordered regions span residues 1-35 (MLPH…VNIE) and 44-63 (SEKL…KKHT). Positions 53–63 (NRSRSGIKKHT) are enriched in basic residues.

This is an uncharacterized protein from Schizosaccharomyces pombe (strain 972 / ATCC 24843) (Fission yeast).